We begin with the raw amino-acid sequence, 251 residues long: Probable ATP-dependent transporter ycf16 (251 aa).

One can recognise an ABC transporter domain in the interval 8-250 (LEIKNLKACI…ELESKGYEWL (243 aa)). 40–47 (GPNGSGKS) serves as a coordination point for ATP.

This sequence belongs to the ABC transporter superfamily. Ycf16 family.

Its subcellular location is the plastid. It localises to the chloroplast. The chain is Probable ATP-dependent transporter ycf16 (ycf16) from Trieres chinensis (Marine centric diatom).